Consider the following 750-residue polypeptide: Amyloid-beta A4 precursor protein-binding family A member 2 (750 aa).

Disordered stretches follow at residues 1 to 94 (MAHR…PEEE) and 143 to 346 (DSVG…IPET). At Ser-11 the chain carries Phosphoserine. The segment covering 70-80 (GDSSSDYVNNT) has biased composition (polar residues). The segment covering 81 to 94 (SEEEDYDEGLPEEE) has biased composition (acidic residues). An STXBP1-binding region spans residues 185–271 (HYCSSKESYQ…STEACPPSDT (87 aa)). Position 209 is a phosphoserine (Ser-209). Acidic residues predominate over residues 219 to 228 (DLEEQEEDID). Polar residues-rich tracts occupy residues 238 to 248 (LSMTSITSASE) and 332 to 344 (SDLNGPTDNNNIP). The region spanning 367-556 (LIDGIIFAAN…IINTQEMYND (190 aa)) is the PID domain. PDZ domains are found at residues 569–654 (ELQL…NIVS) and 660–736 (TVLI…MPAA).

As to quaternary structure, part of a multimeric complex containing STXBP1 and syntaxin-1. Binds to the cytoplasmic domain of amyloid-beta protein, and to the nuclear factor NF-kappa-B/p65 via its PDZ domain. Interacts with the N-terminal domain of NECAB3. As to expression, specifically expressed in neurons, predominantly of the cerebellum, hippocampus, and spinal cord. Lesser extent in neurons of the cerebral cortex and anterior thalmic nuclei.

Functionally, putative function in synaptic vesicle exocytosis by binding to STXBP1, an essential component of the synaptic vesicle exocytotic machinery. May modulate processing of the amyloid-beta precursor protein (APP) and hence formation of APP-beta. The protein is Amyloid-beta A4 precursor protein-binding family A member 2 (Apba2) of Mus musculus (Mouse).